The following is a 320-amino-acid chain: Putative malonate transporter (320 aa).

8 helical membrane passes run 1 to 21, 32 to 52, 65 to 85, 113 to 133, 167 to 187, 196 to 216, 256 to 276, and 289 to 309; these read MAEI…GYLT, MGWL…FKLV, FILT…AIGL, GLAL…IFCF, IAFH…FLSF, LIDY…GVTL, IWVQ…VFVI, and ATIL…LYLI.

The protein belongs to the auxin efflux carrier (TC 2.A.69) family.

Its subcellular location is the cell membrane. The polypeptide is Putative malonate transporter (mdcF) (Rhizobium meliloti (strain 1021) (Ensifer meliloti)).